Consider the following 319-residue polypeptide: L-lactate dehydrogenase 2 (319 aa).

NAD(+) is bound by residues Val17, Asp38, Lys43, Tyr69, and 83–84; that span reads GA. Substrate-binding residues include Gln86 and Arg92. Residues Ser105, 122 to 124, and Ser147 each bind NAD(+); that span reads ATN. Residue 124–127 participates in substrate binding; the sequence is NPVD. 152 to 155 provides a ligand contact to substrate; sequence DSGR. Positions 157 and 172 each coordinate beta-D-fructose 1,6-bisphosphate. The Proton acceptor role is filled by His179. Phosphotyrosine is present on Tyr224. Position 233 (Thr233) interacts with substrate.

It belongs to the LDH/MDH superfamily. LDH family. Homotetramer.

Its subcellular location is the cytoplasm. The catalysed reaction is (S)-lactate + NAD(+) = pyruvate + NADH + H(+). It functions in the pathway fermentation; pyruvate fermentation to lactate; (S)-lactate from pyruvate: step 1/1. Its activity is regulated as follows. Allosterically activated by fructose 1,6-bisphosphate (FBP). Catalyzes the conversion of lactate to pyruvate. The sequence is that of L-lactate dehydrogenase 2 from Peribacillus psychrosaccharolyticus (Bacillus psychrosaccharolyticus).